The following is a 752-amino-acid chain: Catalase-peroxidase 1 (752 aa).

The interval 1 to 45 (MPPNTPDASDARPPQADTETHSHSESENPVIESPKPKAHAPLTNQ) is disordered. The segment at residues 116-244 (WHAAGTYRIF…YGATTMGLIY (129 aa)) is a cross-link (tryptophyl-tyrosyl-methioninium (Trp-Tyr) (with M-270)). The Proton acceptor role is filled by His-117. Positions 244–270 (YVNPEGPEGKPDPLAAAHDIRETFGRM) form a cross-link, tryptophyl-tyrosyl-methioninium (Tyr-Met) (with W-116). Residue His-285 coordinates heme b.

This sequence belongs to the peroxidase family. Peroxidase/catalase subfamily. Homodimer or homotetramer. Heme b serves as cofactor. Formation of the three residue Trp-Tyr-Met cross-link is important for the catalase, but not the peroxidase activity of the enzyme.

It catalyses the reaction H2O2 + AH2 = A + 2 H2O. It carries out the reaction 2 H2O2 = O2 + 2 H2O. In terms of biological role, bifunctional enzyme with both catalase and broad-spectrum peroxidase activity. May play a role in the intracellular survival of mycobacteria. The protein is Catalase-peroxidase 1 of Mycolicibacterium fortuitum (Mycobacterium fortuitum).